The sequence spans 238 residues: Ribitol-5-phosphate cytidylyltransferase (238 aa).

CTP-binding positions include 7–10 (LAGG) and 81–87 (GSDRNET).

Belongs to the IspD/TarI cytidylyltransferase family. TarI subfamily.

It carries out the reaction D-ribitol 5-phosphate + CTP + H(+) = CDP-L-ribitol + diphosphate. The protein operates within cell wall biogenesis; poly(ribitol phosphate) teichoic acid biosynthesis. Functionally, catalyzes the transfer of the cytidylyl group of CTP to D-ribitol 5-phosphate. The protein is Ribitol-5-phosphate cytidylyltransferase of Staphylococcus saprophyticus subsp. saprophyticus (strain ATCC 15305 / DSM 20229 / NCIMB 8711 / NCTC 7292 / S-41).